The sequence spans 299 residues: ATP phosphoribosyltransferase (299 aa).

This sequence belongs to the ATP phosphoribosyltransferase family. Long subfamily. In terms of assembly, equilibrium between an active dimeric form, an inactive hexameric form and higher aggregates. Interconversion between the various forms is largely reversible and is influenced by the natural substrates and inhibitors of the enzyme. It depends on Mg(2+) as a cofactor.

It localises to the cytoplasm. The enzyme catalyses 1-(5-phospho-beta-D-ribosyl)-ATP + diphosphate = 5-phospho-alpha-D-ribose 1-diphosphate + ATP. It functions in the pathway amino-acid biosynthesis; L-histidine biosynthesis; L-histidine from 5-phospho-alpha-D-ribose 1-diphosphate: step 1/9. Its activity is regulated as follows. Feedback inhibited by histidine. Its function is as follows. Catalyzes the condensation of ATP and 5-phosphoribose 1-diphosphate to form N'-(5'-phosphoribosyl)-ATP (PR-ATP). Has a crucial role in the pathway because the rate of histidine biosynthesis seems to be controlled primarily by regulation of HisG enzymatic activity. This chain is ATP phosphoribosyltransferase, found in Escherichia coli O8 (strain IAI1).